We begin with the raw amino-acid sequence, 576 residues long: Proline--tRNA ligase (576 aa).

The protein belongs to the class-II aminoacyl-tRNA synthetase family. ProS type 1 subfamily. As to quaternary structure, homodimer.

The protein resides in the cytoplasm. It carries out the reaction tRNA(Pro) + L-proline + ATP = L-prolyl-tRNA(Pro) + AMP + diphosphate. Catalyzes the attachment of proline to tRNA(Pro) in a two-step reaction: proline is first activated by ATP to form Pro-AMP and then transferred to the acceptor end of tRNA(Pro). As ProRS can inadvertently accommodate and process non-cognate amino acids such as alanine and cysteine, to avoid such errors it has two additional distinct editing activities against alanine. One activity is designated as 'pretransfer' editing and involves the tRNA(Pro)-independent hydrolysis of activated Ala-AMP. The other activity is designated 'posttransfer' editing and involves deacylation of mischarged Ala-tRNA(Pro). The misacylated Cys-tRNA(Pro) is not edited by ProRS. This is Proline--tRNA ligase from Bordetella bronchiseptica (strain ATCC BAA-588 / NCTC 13252 / RB50) (Alcaligenes bronchisepticus).